A 165-amino-acid chain; its full sequence is Large ribosomal subunit protein uL10 (165 aa).

The protein belongs to the universal ribosomal protein uL10 family. As to quaternary structure, part of the ribosomal stalk of the 50S ribosomal subunit. The N-terminus interacts with L11 and the large rRNA to form the base of the stalk. The C-terminus forms an elongated spine to which L12 dimers bind in a sequential fashion forming a multimeric L10(L12)X complex.

Forms part of the ribosomal stalk, playing a central role in the interaction of the ribosome with GTP-bound translation factors. The chain is Large ribosomal subunit protein uL10 from Paraburkholderia phymatum (strain DSM 17167 / CIP 108236 / LMG 21445 / STM815) (Burkholderia phymatum).